The following is a 482-amino-acid chain: QWRF motif-containing protein 3 (482 aa).

Positions 1–20 are enriched in basic and acidic residues; sequence MKSCEHELLKTRRGKSREVS. Disordered regions lie at residues 1–60 and 171–220; these read MKSC…GLKK and TAKP…QWAL. A compositionally biased stretch (low complexity) spans 21–42; the sequence is SRFLSSPSASSSPNRRNSTSNS. The segment covering 191–219 has biased composition (polar residues); that stretch reads RTNSSKGIENRLQRNNSVSRYGSSMSQWA. The short motif at 292–295 is the QWRF motif element; sequence QWRF.

This sequence belongs to the QWRF family.

The protein is QWRF motif-containing protein 3 (QWRF3) of Arabidopsis thaliana (Mouse-ear cress).